The following is a 293-amino-acid chain: MATH domain and coiled-coil domain-containing protein At3g58400 (293 aa).

Residues 3-126 form the MATH domain; sequence RSRSQNLITE…NGELKIVAEI (124 aa). Positions 227-285 form a coiled coil; that stretch reads KLDWLENKLYEVAQKKEDDEAGETRLREMEEKLKDLKLKCSKMEALVEEEKAKVSAAKA.

The protein is MATH domain and coiled-coil domain-containing protein At3g58400 of Arabidopsis thaliana (Mouse-ear cress).